A 279-amino-acid chain; its full sequence is Movement protein (279 aa).

The interval 247–279 (ESEELNVESPPAAIGSSSASRSEAFRPQVVNGL) is disordered. Positions 254–268 (ESPPAAIGSSSASRS) are enriched in low complexity.

It belongs to the cucumovirus movement protein family.

It is found in the host cell junction. Its subcellular location is the host plasmodesma. Transports viral genome to neighboring plant cells directly through plasmosdesmata, without any budding. The movement protein allows efficient cell to cell propagation, by bypassing the host cell wall barrier. Acts by forming a tubular structure at the host plasmodesmata, enlarging it enough to allow free passage of virion capsids. The sequence is that of Movement protein from Cucumis sativus (Cucumber).